Consider the following 241-residue polypeptide: Uridylate kinase (241 aa).

ATP is bound by residues 10–13 (KLSG), Gly53, and Arg57. UMP-binding positions include Asp72 and 133-140 (AGSPYFST). Residues Asn161, Tyr167, and Asp170 each contribute to the ATP site.

The protein belongs to the UMP kinase family. Homohexamer.

The protein resides in the cytoplasm. It carries out the reaction UMP + ATP = UDP + ADP. It functions in the pathway pyrimidine metabolism; CTP biosynthesis via de novo pathway; UDP from UMP (UMPK route): step 1/1. Inhibited by UTP. Catalyzes the reversible phosphorylation of UMP to UDP. The chain is Uridylate kinase from Onion yellows phytoplasma (strain OY-M).